The chain runs to 232 residues: Phosphatidylserine decarboxylase proenzyme (232 aa).

Ser190 (schiff-base intermediate with substrate; via pyruvic acid) is an active-site residue. The residue at position 190 (Ser190) is a Pyruvic acid (Ser); by autocatalysis.

This sequence belongs to the phosphatidylserine decarboxylase family. PSD-A subfamily. As to quaternary structure, heterodimer of a large membrane-associated beta subunit and a small pyruvoyl-containing alpha subunit. Requires pyruvate as cofactor. Is synthesized initially as an inactive proenzyme. Formation of the active enzyme involves a self-maturation process in which the active site pyruvoyl group is generated from an internal serine residue via an autocatalytic post-translational modification. Two non-identical subunits are generated from the proenzyme in this reaction, and the pyruvate is formed at the N-terminus of the alpha chain, which is derived from the carboxyl end of the proenzyme. The post-translation cleavage follows an unusual pathway, termed non-hydrolytic serinolysis, in which the side chain hydroxyl group of the serine supplies its oxygen atom to form the C-terminus of the beta chain, while the remainder of the serine residue undergoes an oxidative deamination to produce ammonia and the pyruvoyl prosthetic group on the alpha chain.

Its subcellular location is the cell membrane. It carries out the reaction a 1,2-diacyl-sn-glycero-3-phospho-L-serine + H(+) = a 1,2-diacyl-sn-glycero-3-phosphoethanolamine + CO2. Its pathway is phospholipid metabolism; phosphatidylethanolamine biosynthesis; phosphatidylethanolamine from CDP-diacylglycerol: step 2/2. Its function is as follows. Catalyzes the formation of phosphatidylethanolamine (PtdEtn) from phosphatidylserine (PtdSer). In Agrobacterium fabrum (strain C58 / ATCC 33970) (Agrobacterium tumefaciens (strain C58)), this protein is Phosphatidylserine decarboxylase proenzyme.